The primary structure comprises 804 residues: G-type lectin S-receptor-like serine/threonine-protein kinase At1g61500 (804 aa).

An N-terminal signal peptide occupies residues 1 to 24 (MMTRFACLHLFTMFLFTLLSGSSS). One can recognise a Bulb-type lectin domain in the interval 25–145 (AVITTESPLS…VSERALWQSF (121 aa)). Residues 25-427 (AVITTESPLS…ELDGNKRKKT (403 aa)) lie on the Extracellular side of the membrane. 3 N-linked (GlcNAc...) asparagine glycosylation sites follow: Asn54, Asn135, and Asn237. The region spanning 279–315 (PKKLCDFYGACGPFGLCVMSPSPMCKCFRGFVPKSVE) is the EGF-like; atypical domain. 2 disulfides stabilise this stretch: Cys283/Cys295 and Cys289/Cys303. Residues Asn321, Asn337, and Asn376 are each glycosylated (N-linked (GlcNAc...) asparagine). The PAN domain maps to 334–416 (CLGNSTGEDA…GELLSIRLAR (83 aa)). Cystine bridges form between Cys369-Cys390 and Cys373-Cys379. Residues 428 to 448 (IVASIVSLTLFMILGFTAFGV) traverse the membrane as a helical segment. Topologically, residues 449–804 (WRCRVEHIAH…GMTQSVILGR (356 aa)) are cytoplasmic. Residues 491-776 (FSLSNKLGQG…DLPSPKQPTF (286 aa)) enclose the Protein kinase domain. ATP contacts are provided by residues 497–505 (LGQGGFGSV) and Lys519. A phosphoserine mark is found at Ser525 and Ser540. The caM-binding stretch occupies residues 580–597 (RKRLEIDWPKRFDIIQGI). The active-site Proton acceptor is the Asp616. Phosphoserine is present on residues Ser620 and Ser633. Phosphothreonine is present on Thr650. Residues Ser693 and Ser787 each carry the phosphoserine modification.

This sequence belongs to the protein kinase superfamily. Ser/Thr protein kinase family.

It is found in the cell membrane. It catalyses the reaction L-seryl-[protein] + ATP = O-phospho-L-seryl-[protein] + ADP + H(+). It carries out the reaction L-threonyl-[protein] + ATP = O-phospho-L-threonyl-[protein] + ADP + H(+). This Arabidopsis thaliana (Mouse-ear cress) protein is G-type lectin S-receptor-like serine/threonine-protein kinase At1g61500.